The primary structure comprises 285 residues: Homeobox protein Hox-A4 (285 aa).

Disordered stretches follow at residues 19–70 (PFEE…APRA) and 94–130 (ASPG…TTPA). The span at 27–41 (GGPGGGDGAVGGGPG) shows a compositional bias: gly residues. Over residues 44–70 (RPQSAPHLPAPNPHAARQPPAYYAPRA) the composition is skewed to low complexity. The span at 106–118 (GAHPSPAPQPPVP) shows a compositional bias: pro residues. Positions 159-164 (VYPWMK) match the Antp-type hexapeptide motif. Residues 180–239 (PKRSRTAYTRQQVLELEKEFHFNRYLTRRRRIEIAHTLCLSERQVKIWFQNRRMKWKKDH) constitute a DNA-binding region (homeobox). A disordered region spans residues 238-285 (DHKLPNTKMRSSNTASAPAGPPGKAQTHSPHHHPHPLPGASTPIPSSI).

Belongs to the Antp homeobox family. Deformed subfamily.

It is found in the nucleus. Sequence-specific transcription factor which is part of a developmental regulatory system that provides cells with specific positional identities on the anterior-posterior axis. Binds to sites in the 5'-flanking sequence of its coding region with various affinities. The consensus sequences of the high and low affinity binding sites are 5'-TAATGA[CG]-3' and 5'-CTAATTTT-3'. This Mus musculus (Mouse) protein is Homeobox protein Hox-A4 (Hoxa4).